A 593-amino-acid polypeptide reads, in one-letter code: La-related protein 7 (593 aa).

Over residues 1–11 (MTAIETDTPSN) the composition is skewed to polar residues. Residues 1-28 (MTAIETDTPSNKVKEDESTDLRKDREKK) form a disordered region. A compositionally biased stretch (basic and acidic residues) spans 12–24 (KVKEDESTDLRKD). The region spanning 30–121 (RSRVKQLLAD…RRRFPLGEKP (92 aa)) is the HTH La-type RNA-binding domain. In terms of domain architecture, RRM spans 127 to 205 (RTVYVELLPK…PRKAGMFPKT (79 aa)). The interval 191–363 (PPEEAPRKAG…STEEEKDAVD (173 aa)) is disordered. Positions 231-240 (KKKKKKKSKA) are enriched in basic residues. Over residues 248–259 (AEEDTKEQDMDI) the composition is skewed to acidic residues. Composition is skewed to basic and acidic residues over residues 295–307 (ERAE…EKVR), 314–340 (SSSE…DEKP), and 348–363 (QECK…DAVD). Residues 461 to 574 (QFVCGVIGKI…TEKLIAKAEK (114 aa)) form the xRRM domain.

The protein belongs to the LARP7 family. Core component of the 7SK RNP complex. Associates with box C/D small nucleolar ribonucleoprotein (snoRNP) complexes.

The protein localises to the nucleus. It localises to the nucleoplasm. Functionally, RNA-binding protein that specifically binds distinct small nuclear RNA (snRNAs) and regulates their processing and function. Specifically binds the 7SK snRNA (7SK RNA) and acts as a core component of the 7SK ribonucleoprotein (RNP) complex, thereby acting as a negative regulator of transcription elongation by RNA polymerase II. The 7SK RNP complex sequesters the positive transcription elongation factor b (P-TEFb) in a large inactive 7SK RNP complex preventing RNA polymerase II phosphorylation and subsequent transcriptional elongation. The 7SK RNP complex also promotes snRNA gene transcription by RNA polymerase II via interaction with the little elongation complex (LEC). LARP7 specifically binds to the highly conserved 3'-terminal U-rich stretch of 7SK RNA; on stimulation, remains associated with 7SK RNA, whereas P-TEFb is released from the complex. LARP7 also acts as a regulator of mRNA splicing fidelity by promoting U6 snRNA processing. Specifically binds U6 snRNAs and associates with a subset of box C/D RNP complexes: promotes U6 snRNA 2'-O-methylation by facilitating U6 snRNA loading into box C/D RNP complexes. U6 snRNA 2'-O-methylation is required for mRNA splicing fidelity. The sequence is that of La-related protein 7 from Xenopus tropicalis (Western clawed frog).